The sequence spans 486 residues: Solute carrier family 2, facilitated glucose transporter member 5 (486 aa).

Met1 is modified (N-acetylmethionine). Over 1-19 the chain is Cytoplasmic; the sequence is MEQEGQEKKKEGRLTLVLA. The chain crosses the membrane as a helical span at residues 20–40; that stretch reads LRTLIAAFGSSFQYAYNVSVC. D-fructose is bound at residue Tyr33. The Extracellular segment spans residues 41-69; sequence NSPSELMTEFYNDTYYDRTGELIDEFPLT. Residue Asn52 is glycosylated (N-linked (GlcNAc...) asparagine). Residues 70-92 form a helical membrane-spanning segment; it reads LLWSVTVSMFPSGGFAGSLLVGP. The Cytoplasmic segment spans residues 93–99; the sequence is LVNKFGR. A helical transmembrane segment spans residues 100-120; it reads KGALLFNNIFSIVPAILMGCS. Topologically, residues 121–127 are extracellular; sequence KVARSFE. Residues 128–150 form a helical membrane-spanning segment; that stretch reads LIIISRLLVGICAGVSSNVVPMY. Over 151–162 the chain is Cytoplasmic; that stretch reads LGELAPKNLRGA. The chain crosses the membrane as a helical span at residues 163–183; it reads LGVESQLFITLGILVAQIFGL. Gln168 contacts D-fructose. At 184–192 the chain is on the extracellular side; it reads RSIRQQKGW. A helical membrane pass occupies residues 193–211; the sequence is PILLGLTGGPAAAACPPFF. The Cytoplasmic portion of the chain corresponds to 212–274; it reads PESPRYLLIG…LCAMRGLAWQ (63 aa). A helical transmembrane segment spans residues 275–294; it reads LISVVPLMWQQLSGVNAIYY. D-fructose-binding positions include Gln284 and 292–294; that span reads IYY. The Extracellular portion of the chain corresponds to 295–306; the sequence is YDQIYLSPLDTD. A helical transmembrane segment spans residues 307–327; the sequence is TQYYTAATGAVNVLMTVCTVF. At 328–334 the chain is on the cytoplasmic side; the sequence is VVESWAR. A helical membrane pass occupies residues 335-355; that stretch reads LLLLLGFSPLAPTCCVLTAAL. Residues 356 to 363 are Extracellular-facing; the sequence is ALQDTVSW. Residues 364–385 form a helical membrane-spanning segment; it reads MPYISIVCIIVYVIGHAIGPAI. D-fructose is bound at residue His379. At 386–402 the chain is on the cytoplasmic side; sequence RSLYTEIFLQSGRPPTW. A helical transmembrane segment spans residues 403-421; the sequence is WGQVHWLSNFTVGLVFPLI. Residue 407-408 coordinates D-fructose; the sequence is HW. Residues 422 to 426 are Extracellular-facing; that stretch reads QWAGL. A helical transmembrane segment spans residues 427 to 447; that stretch reads YSFIIFGVACLSTTVYTFLIV. At 448–486 the chain is on the cytoplasmic side; that stretch reads PETKGKSFIEIIRRFIRMNKVEVSPDREELKDFPPDVSE.

This sequence belongs to the major facilitator superfamily. Sugar transporter (TC 2.A.1.1) family. Glucose transporter subfamily. Detected in jejunum. Detected at the intestinal brush-border membrane (at protein level). Detected in duodenum, jejunum and kidney.

Its subcellular location is the apical cell membrane. The protein resides in the cell membrane. The protein localises to the sarcolemma. The enzyme catalyses D-fructose(out) = D-fructose(in). Its function is as follows. Functions as a fructose transporter that has only low activity with other monosaccharides. Can mediate the uptake of deoxyglucose, but with low efficiency. Essential for fructose uptake in the small intestine. Plays a role in the regulation of salt uptake and blood pressure in response to dietary fructose. Required for the development of high blood pressure in response to high dietary fructose intake. This is Solute carrier family 2, facilitated glucose transporter member 5 from Oryctolagus cuniculus (Rabbit).